Here is a 579-residue protein sequence, read N- to C-terminus: MTSVNEHSLLINNNENNDNNNNHINQRNNKNNINNRNNIGVNNNNNNNNNNNNNNINNNNNNNNNNNNNNNNNNNSNTGKIYLRKKKKWNFRKKILPMIVILIITAIVVCLVVFSLPFDSSNTIYNQSPFVIKEDDNLLELAMKSRQNLLNIHGNQTISKLDFAILVSNPIGYWQLATFNGKNNSNPQQTLFLPLLAAAVNWCMNQNNDPHCLQTAAGPMMNDMSSIHAGILMDIITDAPNQEFQTSNSTGFQSWLTKRESIELFLNSFNLLGNQTIINKFYPSNSGPTATWGEGLIQKLMGDNQMCPYDSALLMLNLVKSGILSEGQSYMTDLISRQTFSTFTSIGFGLPPGTTLHSVLGTSSSTKDLNEIAHLVLPNGGEMIFSIFSNGYENFGHAPYQSSILGNFAGDLIRSLGIDIGCPNKIVMTSQDKNCTVTGAPWTLDTSIQAYNNSFLYISGGVTPTSTVTWSFTINVTGLYEVCVWFPNGDLHTSVSYKVEPGDGMIYYFPVDQVHYGARWIRLDSFFIVAGNQPIISLSNRGIDPSKTVVADSVKLTRWPSSKGIPGFSNDFVIAESPE.

Residues 1–75 are required for targeting to the plasma membrane; sequence MTSVNEHSLL…NNNNNNNNNN (75 aa). Positions 1–79 are disordered; sequence MTSVNEHSLL…NNNNNNSNTG (79 aa). Topologically, residues 1 to 94 are lumenal; sequence MTSVNEHSLL…KKKKWNFRKK (94 aa). Low complexity predominate over residues 11 to 77; sequence INNNENNDNN…NNNNNNNNSN (67 aa). A helical; Signal-anchor for type III membrane protein membrane pass occupies residues 95-115; that stretch reads ILPMIVILIITAIVVCLVVFS. The interval 95 to 118 is required for membrane targeting; that stretch reads ILPMIVILIITAIVVCLVVFSLPF. Residues 116–578 lie on the Cytoplasmic side of the membrane; the sequence is LPFDSSNTIY…SNDFVIAESP (463 aa). The required for transfer to endosomes and contractile vacuoles; the protein is trapped in the Golgi stretch occupies residues 559–579; the sequence is WPSSKGIPGFSNDFVIAESPE.

The protein localises to the contractile vacuole membrane. The protein resides in the endosome membrane. It is found in the golgi apparatus membrane. This Dictyostelium discoideum (Social amoeba) protein is Golvesin (gol).